The sequence spans 883 residues: Valine--tRNA ligase (883 aa).

The 'HIGH' region signature appears at 46-56 (PNVTGKLHLGH). Residues 520–524 (KMSKS) carry the 'KMSKS' region motif. Residue Lys523 coordinates ATP. Positions 809–844 (LADLLNVEEELARLEKELAKWQKELDMVGKKLSNER) form a coiled coil.

Belongs to the class-I aminoacyl-tRNA synthetase family. ValS type 1 subfamily. As to quaternary structure, monomer.

The protein resides in the cytoplasm. It catalyses the reaction tRNA(Val) + L-valine + ATP = L-valyl-tRNA(Val) + AMP + diphosphate. In terms of biological role, catalyzes the attachment of valine to tRNA(Val). As ValRS can inadvertently accommodate and process structurally similar amino acids such as threonine, to avoid such errors, it has a 'posttransfer' editing activity that hydrolyzes mischarged Thr-tRNA(Val) in a tRNA-dependent manner. This is Valine--tRNA ligase from Streptococcus thermophilus (strain CNRZ 1066).